Here is a 141-residue protein sequence, read N- to C-terminus: Large ribosomal subunit protein bL17 (141 aa).

The protein belongs to the bacterial ribosomal protein bL17 family. In terms of assembly, part of the 50S ribosomal subunit. Contacts protein L32.

The chain is Large ribosomal subunit protein bL17 from Agrobacterium fabrum (strain C58 / ATCC 33970) (Agrobacterium tumefaciens (strain C58)).